The primary structure comprises 988 residues: Chloride channel protein 1 (988 aa).

Residues M1–G118 lie on the Cytoplasmic side of the membrane. The span at H65–D75 shows a compositional bias: basic and acidic residues. The interval H65–D92 is disordered. Residues I119–Y150 traverse the membrane as a helical segment. Residues A151 to P158 lie on the Extracellular side of the membrane. Residues L159 to C179 form a helical membrane-spanning segment. At H180–S183 the chain is on the cytoplasmic side. Residues P184–S189 constitute an intramembrane region (note=Loop between two helices). The Selectivity filter part_1 signature appears at G188–P192. S189 is a chloride binding site. Positions G190–K195 form an intramembrane region, helical. At T196–T208 the chain is on the cytoplasmic side. Residues M209–G224 constitute an intramembrane region (helical). The segment at residues S225–G230 is an intramembrane region (note=Loop between two helices). Residues G230 to P234 carry the Selectivity filter part_2 motif. Residues K231 to L246 constitute an intramembrane region (helical). Topologically, residues S247 to T268 are cytoplasmic. 2 intramembrane regions (helical) span residues V269–G280 and T281–I290. The Cytoplasmic portion of the chain corresponds to E291 to N301. A helical transmembrane segment spans residues Y302–V321. Over W322–E347 the chain is Extracellular. Residues L348–V376 traverse the membrane as a helical segment. Topologically, residues R377–R390 are cytoplasmic. Residues L391 to P408 traverse the membrane as a helical segment. The Extracellular segment spans residues G409 to M414. Residues A415 to L418 constitute an intramembrane region (note=Loop between two helices). An intramembrane region (helical) is located at residues M419 to T426. Residues L427 to V457 are Extracellular-facing. The segment at residues I458 to T475 is an intramembrane region (helical). Residues T476–G482 constitute an intramembrane region (note=Loop between two helices). Positions G482–P486 match the Selectivity filter part_3 motif. The segment at residues G483–V498 is an intramembrane region (helical). F484 provides a ligand contact to chloride. The Extracellular portion of the chain corresponds to G499–P521. An intramembrane region (helical) is located at residues G522 to H538. Positions T539–V540 form an intramembrane region, note=Loop between two helices. An intramembrane region (helical) is located at residues S541–A554. Residues H555–L557 are Extracellular-facing. Residues P558 to Q571 constitute an intramembrane region (helical). The note=Loop between two helices intramembrane region spans S572–P575. The segment at residues S576 to Y578 is an intramembrane region (helical). Chloride is bound at residue Y578. Residues D579–L988 lie on the Cytoplasmic side of the membrane. One can recognise a CBS 1 domain in the interval M609 to E668. Residues E713 to R764 are disordered. The CBS 2 domain occupies I821–S876. Residues L880–L988 are disordered. S886 carries the phosphoserine modification. The span at F887–N906 shows a compositional bias: polar residues. Over residues T929–S941 the composition is skewed to pro residues. Composition is skewed to acidic residues over residues E950–A967 and D979–L988.

It belongs to the chloride channel (TC 2.A.49) family. ClC-1/CLCN1 subfamily. In terms of assembly, homodimer. As to expression, predominantly expressed in skeletal muscles.

The protein resides in the cell membrane. The protein localises to the sarcolemma. It localises to the T-tubule. The enzyme catalyses chloride(in) = chloride(out). It catalyses the reaction thiocyanate(in) = thiocyanate(out). The catalysed reaction is bromide(in) = bromide(out). It carries out the reaction nitrate(in) = nitrate(out). The enzyme catalyses iodide(out) = iodide(in). Its activity is regulated as follows. Modulated by membrane voltage with depolarization favouring channel opening and hyperpolarization favouring channel closure. Inhibited by acidic pH and ATP binding due to a shift of voltage dependence of common gating to more positive voltages. Inhibited by 9-anthracene-carboxylic. In terms of biological role, voltage-gated chloride channel involved in skeletal muscle excitability. Generates most of the plasma membrane chloride conductance in skeletal muscle fibers, stabilizes the resting membrane potential and contributes to the repolarization phase during action potential firing. Forms a homodimeric channel where each subunit has its own ion conduction pathway. Conducts double-barreled currents controlled by two types of gates, two fast glutamate gates that control each subunit independently and a slow common gate that opens and shuts off both subunits simultaneously. Has a significant open probability at muscle resting potential and is further activated upon membrane depolarization. Permeable to small monovalent anions with ion selectivity for chloride &gt; thiocyanate &gt; bromide &gt; nitrate &gt; iodide. This is Chloride channel protein 1 from Homo sapiens (Human).